The primary structure comprises 103 residues: SLC35A4 upstream open reading frame protein (103 aa).

Residues 62–84 (ASAVLGFAVGTCTGIYAAQAYAV) traverse the membrane as a helical segment.

The protein resides in the mitochondrion inner membrane. Required to maintain cellular respiration. This Homo sapiens (Human) protein is SLC35A4 upstream open reading frame protein.